The primary structure comprises 631 residues: tRNA uridine 5-carboxymethylaminomethyl modification enzyme MnmG (631 aa).

FAD is bound by residues 13–18 (GGGHAG), Val-125, and Ser-180. 273 to 287 (GPRYCPSIEDKVMRF) contacts NAD(+). Residue Gln-370 coordinates FAD.

This sequence belongs to the MnmG family. In terms of assembly, homodimer. Heterotetramer of two MnmE and two MnmG subunits. The cofactor is FAD.

The protein localises to the cytoplasm. Its function is as follows. NAD-binding protein involved in the addition of a carboxymethylaminomethyl (cmnm) group at the wobble position (U34) of certain tRNAs, forming tRNA-cmnm(5)s(2)U34. The chain is tRNA uridine 5-carboxymethylaminomethyl modification enzyme MnmG from Vibrio campbellii (strain ATCC BAA-1116).